The following is a 264-amino-acid chain: Accessory gland-specific peptide 26Aa (264 aa).

The signal sequence occupies residues 1-18 (MNQILLCSPILLLLFTVA). The interval 1-138 (MNQILLCSPI…LQQRLLTEQN (138 aa)) is sufficient for promoting ovulation when expressed in females. N-linked (GlcNAc...) asparagine glycosylation is found at Asn-88, Asn-122, Asn-138, and Asn-145. Positions 189–219 (LQNTRKSTKPCKKRSSKDSAPPAANQFQEAN) are disordered. The segment covering 194–203 (KSTKPCKKRS) has biased composition (basic residues). Positions 219-264 (NVRNTYRNKYLTLLKELSQKINNEIAKVATDVPTETNPSQGNLPTL) are necessary and sufficient for homodimerization.

As to quaternary structure, homodimer. In terms of assembly, may form a homodimer. In terms of processing, glycosylation. Undergoes several cleavages as it is secreted and is further processed in the recipient female. The precursor molecule is proteolytically cleaved by the seminal metalloprotease Semp1 at Lys-48 to produce CP1-N and CP1-C. Post-translationally, cleaved at Lys-67 by Semp1 to generate CP2-N and CP2-C. Cleavage appears to take place in the mated female genital tract. In terms of processing, cleaved at Lys-117 by Semp1 to generate CP3-N and CP3-C. Cleavage appears to take place in the mated female genital tract. As to expression, produced in the male accessory glands and secreted into seminal fluid (at protein level). Detected in the main cells and secondary cells of the accessory glands of 1 day old males (at protein level). In 5 day old males, confined to the secondary cells and only reappears in the main cells after mating (at protein level). Produced in adult males 3-4 hr after eclosion, levels increase reaching a peak at day 3-5 which is maintained until at least day 10 of adulthood (at protein level). In unmated male adults, levels are maintained for the first 6 days of adulthood and then gradually decrease for at least the next 8 days. In mated females, detected in the genital tract 3 minutes after the start of mating (ASM) and is secreted into the female hemolymph via the posterior vaginal wall 5 minutes ASM (at protein level).

Its subcellular location is the secreted. It is found in the cytoplasm. Its function is as follows. Male seminal protein which enhances ovulation in female Drosophila by stimulating the release of oocytes by the ovary following mating. Acts by increasing octopamine (OA) neuronal signaling in the female genital tract leading to the postmating relaxation of the oviduct muscles. This activation of the OA signaling pathway is likely to indirectly contribute to the mating-dependent increase in the number of OA synaptic sites in the female reproductive tract. Functionally, male seminal peptide which is able to enhance ovulation in female Drosophila. The polypeptide is Accessory gland-specific peptide 26Aa (Drosophila melanogaster (Fruit fly)).